A 270-amino-acid polypeptide reads, in one-letter code: MTAKVRIAVVGASGRMGRTLIESAKQQQVIILGAAIERTGSSLIGIDAGVLAGVGAMNVAITDSLDKVVNDFDVLIDFTSPESSIIHLDWCAKNHKAIVIGTTGFNHAQKEQINAYSEQVPVVLAPNMSVGVNVMWKLLALATEVMGDYTDIEIIEAHHRHKKDAPSGTALKMGEIIAQTLGRDLEQCAVFGREGITGERDPNTIGFATVRAGDIVGEHTAMFADIGERLEITHKASSRMTFANGAMRAAFWLSDQNAGLYDMQQVLGLN.

NAD(+) is bound by residues glycine 11–methionine 16 and glutamate 37. Arginine 38 contributes to the NADP(+) binding site. NAD(+)-binding positions include glycine 101–threonine 103 and alanine 125–methionine 128. Catalysis depends on histidine 158, which acts as the Proton donor/acceptor. (S)-2,3,4,5-tetrahydrodipicolinate is bound at residue histidine 159. Lysine 162 (proton donor) is an active-site residue. Glycine 168 to threonine 169 contributes to the (S)-2,3,4,5-tetrahydrodipicolinate binding site.

The protein belongs to the DapB family.

It localises to the cytoplasm. The catalysed reaction is (S)-2,3,4,5-tetrahydrodipicolinate + NAD(+) + H2O = (2S,4S)-4-hydroxy-2,3,4,5-tetrahydrodipicolinate + NADH + H(+). It carries out the reaction (S)-2,3,4,5-tetrahydrodipicolinate + NADP(+) + H2O = (2S,4S)-4-hydroxy-2,3,4,5-tetrahydrodipicolinate + NADPH + H(+). It functions in the pathway amino-acid biosynthesis; L-lysine biosynthesis via DAP pathway; (S)-tetrahydrodipicolinate from L-aspartate: step 4/4. Its function is as follows. Catalyzes the conversion of 4-hydroxy-tetrahydrodipicolinate (HTPA) to tetrahydrodipicolinate. This Shewanella frigidimarina (strain NCIMB 400) protein is 4-hydroxy-tetrahydrodipicolinate reductase.